We begin with the raw amino-acid sequence, 355 residues long: Homeobox protein knotted-1-like 12 (355 aa).

Disordered stretches follow at residues 52 to 82 (AAGP…GGGE) and 207 to 233 (ECVG…PRAE). A compositionally biased stretch (basic residues) spans 60–75 (GHGHPHHGGGHHHSKH). Residues 218 to 233 (PSGRENEPPEIDPRAE) show a composition bias toward basic and acidic residues. An ELK domain is found at 236–256 (ELKFQLLKKYSGYLSSLRQEF). Residues 257-320 (SKKKKKGKLP…NQRKRHWKPS (64 aa)) constitute a DNA-binding region (homeobox; TALE-type).

It belongs to the TALE/KNOX homeobox family. In terms of tissue distribution, expressed in stems, rachis and inflorescence.

It is found in the nucleus. Probable transcription factor that may be involved in shoot formation during embryogenesis. The protein is Homeobox protein knotted-1-like 12 (OSH15) of Oryza sativa subsp. japonica (Rice).